The chain runs to 4391 residues: Basement membrane-specific heparan sulfate proteoglycan core protein (4391 aa).

An N-terminal signal peptide occupies residues 1–21; it reads MGWRAAGALLLALLLHGRLLA. O-linked (GalNAc...) threonine glycosylation occurs at Thr42. Ser65, Ser71, and Ser76 each carry an O-linked (Xyl...) (heparan sulfate) serine glycan. The SEA domain occupies 80–191; that stretch reads QMVYFRALVN…QGFQFRRLGT (112 aa). N-linked (GlcNAc...) asparagine glycosylation is present at Asn89. 4 LDL-receptor class A domains span residues 198–235, 284–320, 324–360, and 367–404; these read ACTEAEFACHSYNECVALEYRCDRRPDCRDMSDELNCE, PCGPQEAACRNGHCIPRDYLCDGQEDCEDGSDELDCG, PCEPNEFPCGNGHCALKLWRCDGDFDCEDRTDEANCP, and VCGPTQFRCVSTNMCIPASFHCDEESDCPDRSDEFGCM. Cystine bridges form between Cys199–Cys212, Cys206–Cys225, Cys219–Cys234, Cys285–Cys297, Cys292–Cys310, Cys304–Cys319, Cys325–Cys337, Cys332–Cys350, Cys344–Cys359, Cys368–Cys381, Cys375–Cys394, and Cys388–Cys403. Residues 405 to 504 form the Ig-like C2-type 1 domain; that stretch reads PPQVVTPPRE…VLELVPQRGP (100 aa). The Laminin EGF-like 1; first part domain occupies 521–530; the sequence is CFCFGITSVC. A Laminin IV type A 1 domain is found at 538 to 730; that stretch reads DQIRLRFDQP…SHGRAHSVEE (193 aa). An N-linked (GlcNAc...) asparagine glycan is attached at Asn554. Positions 731–763 constitute a Laminin EGF-like 1; second part domain; it reads CRCPIGYSGLSCESCDAHFTRVPGGPYLGTCSG. 11 disulfides stabilise this stretch: Cys764–Cys773, Cys766–Cys780, Cys783–Cys792, Cys795–Cys811, Cys814–Cys829, Cys816–Cys839, Cys842–Cys851, Cys854–Cys869, Cys879–Cys892, Cys894–Cys903, and Cys906–Cys921. 2 Laminin EGF-like domains span residues 764-813 and 814-871; these read CNCN…SCRP and CPCP…KCRP. The region spanning 879–923 is the Laminin EGF-like 4; truncated domain; the sequence is CDERGSMGTSGEACRCKNNVVGRLCNECADGSFHLSTRNPDGCLK. The Laminin EGF-like 5; first part domain maps to 924 to 933; the sequence is CFCMGVSRHC. The 185-residue stretch at 941-1125 folds into the Laminin IV type A 2 domain; that stretch reads AQLHGASEEP…GQDPALEVEQ (185 aa). The Laminin EGF-like 5; second part domain occupies 1126–1158; the sequence is CSCPPGYRGPSCQDCDTGYTRTPSGLYLGTCER. 12 cysteine pairs are disulfide-bonded: Cys1159–Cys1168, Cys1161–Cys1175, Cys1178–Cys1187, Cys1190–Cys1206, Cys1209–Cys1224, Cys1211–Cys1234, Cys1237–Cys1246, Cys1249–Cys1263, Cys1275–Cys1287, Cys1277–Cys1293, Cys1295–Cys1304, and Cys1307–Cys1322. Laminin EGF-like domains lie at 1159–1208, 1209–1265, and 1275–1324; these read CSCH…DCQL, CPCY…PCQR, and CNCD…GCLP. The 10-residue stretch at 1325–1334 folds into the Laminin EGF-like 9; first part domain; sequence CFCMGITQQC. The Laminin IV type A 3 domain maps to 1344-1529; it reads ISTHFAPGDF…NRPRALEVEE (186 aa). Positions 1530–1562 constitute a Laminin EGF-like 9; second part domain; sequence CRCPPGYIGLSCQDCAPGYTRTGSGLYLGHCEL. Cystine bridges form between Cys1563/Cys1572, Cys1565/Cys1579, Cys1582/Cys1591, Cys1594/Cys1610, Cys1613/Cys1628, Cys1615/Cys1638, Cys1641/Cys1650, and Cys1653/Cys1668. Laminin EGF-like domains are found at residues 1563-1612 and 1613-1670; these read CECN…DCQP and CACP…QCLP. 21 Ig-like C2-type domains span residues 1677–1771, 1772–1865, 1866–1955, 1956–2051, 2052–2151, 2152–2244, 2245–2340, 2341–2436, 2437–2533, 2534–2629, 2630–2726, 2727–2826, 2827–2924, 2925–3021, 3022–3112, 3113–3211, 3212–3298, 3299–3399, 3400–3488, 3489–3574, and 3575–3662; these read LVVE…SKPI, TVTV…TLSA, PVVS…GGGG, PRVQ…ASPP, PVKI…PGST, RPIR…PGPI, PPVR…AGST, QPIR…LGVT, PTVR…QGVA, YPVR…PSVS, PPIR…PGSS, MPIR…PGGA, PPIR…PGLA, QPIY…RLRS, PVIS…HGPP, TVSV…APGA, PQVQ…VESP, PYAT…AGST, PTVQ…ALPS, VLIN…LVQA, and LPQI…PERV. Residue Asn1755 is glycosylated (N-linked (GlcNAc...) asparagine). A glycan (N-linked (GlcNAc...) asparagine) is linked at Asn2121. A disordered region spans residues 2994–3014; it reads ASGPGPEQEASFTVTVPPSEG. Ser2995 is a glycosylation site (O-linked (Xyl...) (chondroitin sulfate) serine). The segment covering 3003 to 3014 has biased composition (polar residues); it reads ASFTVTVPPSEG. Residues Asn3072 and Asn3105 are each glycosylated (N-linked (GlcNAc...) asparagine). Asn3279 carries an N-linked (GlcNAc...) asparagine glycan. One can recognise a Laminin G-like 1 domain in the interval 3663–3843; the sequence is VPYFTQTPYS…DLNLTAHGIS (181 aa). 2 N-linked (GlcNAc...) asparagine glycosylation sites follow: Asn3780 and Asn3836. 7 disulfides stabilise this stretch: Cys3819-Cys3845, Cys3848-Cys3859, Cys3853-Cys3869, Cys3871-Cys3880, Cys3888-Cys3899, Cys3893-Cys3910, and Cys3912-Cys3921. EGF-like domains follow at residues 3844-3881 and 3884-3922; these read HCPTCRDRPCQNGGQCHDSESSSYVCVCPAGFTGSRCE and QALHCHPEACGPDATCVNRPDGRGYTCRCHLGRSGLRCE. The Laminin G-like 2 domain occupies 3928–4103; the sequence is TTPSLSGAGS…LGSQGIGQCY (176 aa). An O-linked (Xyl...) (chondroitin sulfate) serine glycan is attached at Ser3933. An N-linked (GlcNAc...) asparagine glycan is attached at Asn4068. Disulfide bonds link Cys4076-Cys4102, Cys4108-Cys4119, Cys4113-Cys4129, Cys4131-Cys4140, Cys4147-Cys4159, Cys4153-Cys4164, and Cys4166-Cys4175. EGF-like domains follow at residues 4104–4141 and 4143–4176; these read DSSPCERQPCQHGATCMPAGEYEFQCLCRDGFKGDLCE and EENPCQLREPCLHGGTCQGTRCLCLPGFSGPRCQ. Residues 4149–4151 are mediates motor neuron attachment; it reads LRE. Ser4179 and Ser4193 each carry an O-linked (Xyl...) (chondroitin sulfate) serine glycan. The Laminin G-like 3 domain maps to 4201–4389; that stretch reads QYGAYFHDDG…AQAGANTRPC (189 aa). 2 residues coordinate Ca(2+): Asp4258 and Leu4275. The tract at residues 4299–4301 is mediates motor neuron attachment; that stretch reads LRE. Residues Ala4325 and Asn4327 each contribute to the Ca(2+) site. Residues Cys4355 and Cys4389 are joined by a disulfide bond. Positions 4364-4391 are disordered; it reads ARPGAPPPQPLDLQHRAQAGANTRPCPS.

In terms of assembly, has a strong tendency to aggregate in dimers or stellate structures. Interacts with other basement membrane components such as laminin, prolargin and collagen type IV. Interacts with COL13A1. Interacts with FGFBP1. Interacts with VWA1. Interacts (via C-terminus) with ECM1 (via C-terminus). Interacts with SVEP1. Post-translationally, proteolytic processing produces the C-terminal angiogenic peptide, endorepellin. This peptide can be further processed to produce the LG3 peptide. O-glycosylated with core 1 or possibly core 8 glycans. Contains three heparan sulfate chains. Also contains chondroitin sulfate. As to expression, detected in cerebrospinal fluid, fibroblasts and urine (at protein level).

It localises to the secreted. The protein resides in the extracellular space. The protein localises to the extracellular matrix. It is found in the basement membrane. Its function is as follows. Integral component of basement membranes. Component of the glomerular basement membrane (GBM), responsible for the fixed negative electrostatic membrane charge, and which provides a barrier which is both size- and charge-selective. It serves as an attachment substrate for cells. Plays essential roles in vascularization. Critical for normal heart development and for regulating the vascular response to injury. Also required for avascular cartilage development. Anti-angiogenic and anti-tumor peptide that inhibits endothelial cell migration, collagen-induced endothelial tube morphogenesis and blood vessel growth in the chorioallantoic membrane. Blocks endothelial cell adhesion to fibronectin and type I collagen. Anti-tumor agent in neovascularization. Interaction with its ligand, integrin alpha2/beta1, is required for the anti-angiogenic properties. Evokes a reduction in phosphorylation of receptor tyrosine kinases via alpha2/beta1 integrin-mediated activation of the tyrosine phosphatase, PTPN6. Functionally, has anti-angiogenic properties that require binding of calcium ions for full activity. The chain is Basement membrane-specific heparan sulfate proteoglycan core protein (HSPG2) from Homo sapiens (Human).